An 826-amino-acid chain; its full sequence is Glycerol-3-phosphate acyltransferase 1, mitochondrial (826 aa).

At 1-87 (MDESALTLGT…FFNPSIPSLG (87 aa)) the chain is on the cytoplasmic side. An important for mitochondrial localization region spans residues 80 to 120 (NPSIPSLGLRNVIYINETHTRHRGWLARRLSYVLFIQERDV). Residues 88–118 (LRNVIYINETHTRHRGWLARRLSYVLFIQER) lie within the membrane without spanning it. Topologically, residues 119–826 (DVHKGMFATN…LEYILSFVVL (708 aa)) are cytoplasmic. The HXXXXD motif motif lies at 230–235 (HRSHID). CoA is bound by residues arginine 278, arginine 279, lysine 288, arginine 293, and arginine 328. Residue serine 380 is modified to Phosphoserine. Arginine 462 contacts CoA. Phosphoserine is present on residues serine 686 and serine 693. N6-acetyllysine is present on residues lysine 778 and lysine 782.

Belongs to the GPAT/DAPAT family.

It localises to the mitochondrion outer membrane. It catalyses the reaction sn-glycerol 3-phosphate + an acyl-CoA = a 1-acyl-sn-glycero-3-phosphate + CoA. The enzyme catalyses (9Z,12Z)-octadecadienoyl-CoA + sn-glycerol 3-phosphate = 1-(9Z,12Z)-octadecadienoyl-sn-glycero-3-phosphate + CoA. It carries out the reaction sn-glycerol 3-phosphate + (9Z)-octadecenoyl-CoA = 1-(9Z-octadecenoyl)-sn-glycero-3-phosphate + CoA. The catalysed reaction is sn-glycerol 3-phosphate + octadecanoyl-CoA = 1-octadecanoyl-sn-glycero-3-phosphate + CoA. It catalyses the reaction sn-glycerol 3-phosphate + hexadecanoyl-CoA = 1-hexadecanoyl-sn-glycero-3-phosphate + CoA. The enzyme catalyses dodecanoyl-CoA + sn-glycerol 3-phosphate = 1-dodecanoyl-sn-glycerol 3-phosphate + CoA. It carries out the reaction 1-acyl-sn-glycero-3-phospho-(1'-sn-glycerol) + an acyl-CoA = a 1,2-diacyl-sn-glycero-3-phospho-(1'-sn-glycerol) + CoA. It functions in the pathway phospholipid metabolism; CDP-diacylglycerol biosynthesis; CDP-diacylglycerol from sn-glycerol 3-phosphate: step 1/3. Functionally, mitochondrial membrane protein that catalyzes the essential first step of biosynthesis of glycerolipids such as triglycerides, phosphatidic acids and lysophosphatidic acids. Esterifies acyl-group from acyl-coenzyme A (acyl-CoA) to the sn-1 position of glycerol-3-phosphate, to produce lysophosphatidic acid. Has a narrow hydrophobic binding cleft that selects for a linear acyl chain. Catalytic activity is higher for substrates with a 16-carbon acyl chain. In Sus scrofa (Pig), this protein is Glycerol-3-phosphate acyltransferase 1, mitochondrial.